The sequence spans 336 residues: Holliday junction branch migration complex subunit RuvB (336 aa).

The tract at residues 4-184 (ADRLISAGTT…FGIVQRLEFY (181 aa)) is large ATPase domain (RuvB-L). ATP-binding positions include Ile-23, Arg-24, Gly-65, Lys-68, Thr-69, Thr-70, 131 to 133 (EDY), Arg-174, Tyr-184, and Arg-221. Position 69 (Thr-69) interacts with Mg(2+). Positions 185-255 (QVPDLQYIVS…IAAQALDMLN (71 aa)) are small ATPAse domain (RuvB-S). The segment at 258–336 (AEGFDYMDRK…HFGITPPEMP (79 aa)) is head domain (RuvB-H). DNA is bound by residues Arg-294, Arg-313, and Arg-318.

It belongs to the RuvB family. Homohexamer. Forms an RuvA(8)-RuvB(12)-Holliday junction (HJ) complex. HJ DNA is sandwiched between 2 RuvA tetramers; dsDNA enters through RuvA and exits via RuvB. An RuvB hexamer assembles on each DNA strand where it exits the tetramer. Each RuvB hexamer is contacted by two RuvA subunits (via domain III) on 2 adjacent RuvB subunits; this complex drives branch migration. In the full resolvosome a probable DNA-RuvA(4)-RuvB(12)-RuvC(2) complex forms which resolves the HJ.

The protein localises to the cytoplasm. The catalysed reaction is ATP + H2O = ADP + phosphate + H(+). In terms of biological role, the RuvA-RuvB-RuvC complex processes Holliday junction (HJ) DNA during genetic recombination and DNA repair, while the RuvA-RuvB complex plays an important role in the rescue of blocked DNA replication forks via replication fork reversal (RFR). RuvA specifically binds to HJ cruciform DNA, conferring on it an open structure. The RuvB hexamer acts as an ATP-dependent pump, pulling dsDNA into and through the RuvAB complex. RuvB forms 2 homohexamers on either side of HJ DNA bound by 1 or 2 RuvA tetramers; 4 subunits per hexamer contact DNA at a time. Coordinated motions by a converter formed by DNA-disengaged RuvB subunits stimulates ATP hydrolysis and nucleotide exchange. Immobilization of the converter enables RuvB to convert the ATP-contained energy into a lever motion, pulling 2 nucleotides of DNA out of the RuvA tetramer per ATP hydrolyzed, thus driving DNA branch migration. The RuvB motors rotate together with the DNA substrate, which together with the progressing nucleotide cycle form the mechanistic basis for DNA recombination by continuous HJ branch migration. Branch migration allows RuvC to scan DNA until it finds its consensus sequence, where it cleaves and resolves cruciform DNA. The protein is Holliday junction branch migration complex subunit RuvB of Shigella flexneri serotype 5b (strain 8401).